The chain runs to 1134 residues: Protocadherin 18 (1134 aa).

Positions 1-27 are cleaved as a signal peptide; that stretch reads MHQMNTKMHFRFALALLMAFFSHDVLA. 6 consecutive Cadherin domains span residues 28-137, 138-246, 247-354, 361-465, 466-576, and 582-688; these read KNLK…SPQF, SRPV…SPAF, EQPS…KPEI, PGKE…PPRF, QRSR…VPVV, and HNNT…STAM. The Extracellular portion of the chain corresponds to 28-699; it reads KNLKYRIYEE…SVSRASLDVS (672 aa). N-linked (GlcNAc...) asparagine glycosylation is present at N103. Residue N269 is glycosylated (N-linked (GlcNAc...) asparagine). An N-linked (GlcNAc...) asparagine glycan is attached at N559. The helical transmembrane segment at 700–720 threads the bilayer; the sequence is MIIIISLGAICAVLLVIMVLF. Over 721–1134 the chain is Cytoplasmic; that stretch reads ATRCNREKKD…NKLLQDVRQS (414 aa). 4 disordered regions span residues 769-800, 868-888, 941-1004, and 1022-1083; these read LPIRSHHRSSPSSSPTLERGQMGSRQSHNSHQ, SLKDSGRGDSEAGDSDYDLGR, DYRS…SSLL, and FSEC…PSSK. The segment covering 791 to 800 has biased composition (polar residues); the sequence is GSRQSHNSHQ. The span at 868 to 877 shows a compositional bias: basic and acidic residues; sequence SLKDSGRGDS. The tract at residues 892–1134 is interaction with DAB1; the sequence is IDRLLGEGFS…NKLLQDVRQS (243 aa). Basic and acidic residues predominate over residues 1027-1038; the sequence is EGDRSNSLERRK. The segment covering 1059–1082 has biased composition (polar residues); that stretch reads THFQNPTSSSGTPLGTHSSVQPSS.

In terms of assembly, interacts with DAB1. In terms of tissue distribution, predominantly expressed in kidney and lung.

Its subcellular location is the cell membrane. Functionally, potential calcium-dependent cell-adhesion protein. The protein is Protocadherin 18 (Pcdh18) of Mus musculus (Mouse).